We begin with the raw amino-acid sequence, 754 residues long: MHALGHCCTVVTTRGPSHWLLLLDTHLGTLPGFKVSAGRGLPAAEVYFEAGPRVSLSRTDATIVAVYQSILFQLLGPTFPASWTEIGATMPHNEYTFPRFISNPPQFATLAFLPLLSPTSPLDLRALMVTAQLMCDAKRLSDEYTDYSTLSASLHGRMVATPEISWSLYVVLGIDSTQTSLSYFTRANESITYMRYYATAHNIHLRAADLPLVAAVRLDDLKDHQIPAPGSWDDLAPKLRFLPPELCLLLPDEFDLIRVQALQFLPEIAKHICDIQNTICALDKSFPDCGRIGGERYFAITAGLRLDQGRGRGLAGWRTPFGPFGVSHTDVFQRLELLGDAVLGFIVTARLLCLFPDASVGTLVELKMELVRNEALNYLVQTLGLPQLAEFSNNLVAKSKTWADMYEEIVGSIFTGPNGIYGCEEFLAKTLMSPEHSKTVGSACPDAVTKASKRVCMGEAGAHEFRSLVDYACEQGISVFCSSRVSTMFLERLRDIPAEDMLDWYRLGIQFSHRSGLSGPGGVVSVIDIMTHLARGLWLGSPGFYVEQQTDKNESACPPTIPVLYIYHRSVQCPVLYGSLTETPTGPVASKVLALYEKILAYESSGGSKHIAAQTVSRSLAVPIPSGTIPFLIRLLQIALTPHVYQKLELLGDAFLKCSLALHLHALHPTLTEGALTRMRQSAETNSVLGRLTKRFPSVVSEVIIESHPKIQPDSKVYGDTFEAILAAILLACGEEAAGAFVREHVLPQVVADA.

Residues 132–251 form the PAZ domain; the sequence is QLMCDAKRLS…LPPELCLLLP (120 aa). 2 consecutive RNase III domains span residues 298-418 and 613-734; these read FAIT…TGPN and AQTV…LACG. Mn(2+)-binding residues include glutamate 336, aspartate 404, glutamate 407, glutamate 649, aspartate 720, and glutamate 723.

Homodimer. The cofactor is Mg(2+). Requires Mn(2+) as cofactor.

Its function is as follows. Involved in cleaving double-stranded RNA in the RNA interference (RNAi) pathway. It produces 21 to 23 bp dsRNAs (siRNAs) which target the selective destruction of homologous RNAs. The polypeptide is Endoribonuclease Dicer-like (Giardia intestinalis (strain ATCC 50803 / WB clone C6) (Giardia lamblia)).